The sequence spans 357 residues: Prostaglandin E2 receptor EP2 subtype (357 aa).

The Extracellular segment spans residues 1–24 (MDNSFNDSRRVENCESRQYLLSDE). N-linked (GlcNAc...) asparagine glycosylation is present at Asn6. A helical transmembrane segment spans residues 25–48 (SPAISSVMFTAGVLGNLIALALLA). Topologically, residues 49–66 (RRWRGDTGCSAGSRTSIS) are cytoplasmic. Residues 67-92 (LFHVLVTELVLTDLLGTCLISPVVLA) form a helical membrane-spanning segment. Residues 93-112 (SYSRNQTLVALAPESRACTY) lie on the Extracellular side of the membrane. Cys110 and Cys188 are oxidised to a cystine. A helical transmembrane segment spans residues 113-133 (FAFTMTFFSLATMLMLFAMAL). Topologically, residues 134–152 (ERYLAIGHPYFYRRRVSRR) are cytoplasmic. Residues 153–177 (GGLAVLPAIYGVSLLFCSLPLLNYG) traverse the membrane as a helical segment. Over 178 to 199 (EYVQYCPGTWCFIQHGRTAYLQ) the chain is Extracellular. The helical transmembrane segment at 200–224 (LYATVLLLLIVAVLGCNISVILNLI) threads the bilayer. Topologically, residues 225–262 (RMQLRSKRSRCGLSGSSLRGPGSRRRGERTSMAEETDH) are cytoplasmic. Over residues 235–245 (CGLSGSSLRGP) the composition is skewed to low complexity. The tract at residues 235-255 (CGLSGSSLRGPGSRRRGERTS) is disordered. Residues 263–286 (LILLAIMTITFAVCSLPFTIFAYM) form a helical membrane-spanning segment. The Extracellular segment spans residues 287–299 (DETSSRKEKWDLR). Residues 300–323 (ALRFLSVNSIIDPWVFVILRPPVL) form a helical membrane-spanning segment. At 324–357 (RLMRSVLCCRTSLRAPEAPGASCSTQQTDLCGQL) the chain is on the cytoplasmic side.

Belongs to the G-protein coupled receptor 1 family.

Its subcellular location is the cell membrane. Its function is as follows. Receptor for prostaglandin E2 (PGE2). The activity of this receptor is mediated by G(s) proteins that stimulate adenylate cyclase. The subsequent raise in intracellular cAMP is responsible for the relaxing effect of this receptor on smooth muscle. In Rattus norvegicus (Rat), this protein is Prostaglandin E2 receptor EP2 subtype (Ptger2).